Reading from the N-terminus, the 266-residue chain is Interleukin-1 beta (266 aa).

Positions 1 to 113 are excised as a propeptide; it reads MATVPEPINE…ETSSDEFLCD (113 aa).

Belongs to the IL-1 family. Monomer. In its precursor form, weakly interacts with full-length MEFV; the mature cytokine does not interact at all. Interacts with integrins ITGAV:ITGBV and ITGA5:ITGB1; integrin-binding is required for IL1B signaling. Interacts with cargo receptor TMED10; the interaction is direct and is required for the secretion of IL1B mature form. Interacts with HSP90AB1; the interaction facilitates cargo translocation into the ERGIC. Interacts with HSP90B1; the interaction facilitates cargo translocation into the ERGIC.

Its subcellular location is the cytoplasm. The protein localises to the cytosol. It localises to the secreted. The protein resides in the lysosome. It is found in the extracellular exosome. Its function is as follows. Potent pro-inflammatory cytokine. Initially discovered as the major endogenous pyrogen, induces prostaglandin synthesis, neutrophil influx and activation, T-cell activation and cytokine production, B-cell activation and antibody production, and fibroblast proliferation and collagen production. Promotes Th17 differentiation of T-cells. Synergizes with IL12/interleukin-12 to induce IFNG synthesis from T-helper 1 (Th1) cells. Plays a role in angiogenesis by inducing VEGF production synergistically with TNF and IL6. Involved in transduction of inflammation downstream of pyroptosis: its mature form is specifically released in the extracellular milieu by passing through the gasdermin-D (GSDMD) pore. This Bubalus carabanensis (Swamp type water buffalo) protein is Interleukin-1 beta (IL1B).